A 118-amino-acid polypeptide reads, in one-letter code: Peptidyl-tRNA hydrolase (118 aa).

It belongs to the PTH2 family.

The protein localises to the cytoplasm. The catalysed reaction is an N-acyl-L-alpha-aminoacyl-tRNA + H2O = an N-acyl-L-amino acid + a tRNA + H(+). In terms of biological role, the natural substrate for this enzyme may be peptidyl-tRNAs which drop off the ribosome during protein synthesis. The chain is Peptidyl-tRNA hydrolase from Thermococcus sibiricus (strain DSM 12597 / MM 739).